The primary structure comprises 237 residues: Trypsin-1 (237 aa).

The region spanning 1–237 (IVGGTDAVLG…HVDWIKANAV (237 aa)) is the Peptidase S1 domain. An intrachain disulfide couples cysteine 30 to cysteine 46. The Charge relay system role is filled by histidine 45. Ca(2+)-binding residues include glutamate 64, valine 69, and glutamate 74. Aspartate 96 (charge relay system) is an active-site residue. Intrachain disulfides connect cysteine 159/cysteine 174 and cysteine 185/cysteine 213. The active-site Charge relay system is the serine 189.

The protein belongs to the peptidase S1 family. Requires Ca(2+) as cofactor.

Its subcellular location is the secreted. It localises to the extracellular space. It catalyses the reaction Preferential cleavage: Arg-|-Xaa, Lys-|-Xaa.. The sequence is that of Trypsin-1 from Astacus astacus (Noble crayfish).